The chain runs to 1361 residues: DNA-directed RNA polymerase subunit beta (1361 aa).

Belongs to the RNA polymerase beta chain family. In terms of assembly, the RNAP catalytic core consists of 2 alpha, 1 beta, 1 beta' and 1 omega subunit. When a sigma factor is associated with the core the holoenzyme is formed, which can initiate transcription.

The enzyme catalyses RNA(n) + a ribonucleoside 5'-triphosphate = RNA(n+1) + diphosphate. DNA-dependent RNA polymerase catalyzes the transcription of DNA into RNA using the four ribonucleoside triphosphates as substrates. This chain is DNA-directed RNA polymerase subunit beta, found in Saccharophagus degradans (strain 2-40 / ATCC 43961 / DSM 17024).